We begin with the raw amino-acid sequence, 217 residues long: 3,4-dihydroxy-2-butanone 4-phosphate synthase (217 aa).

D-ribulose 5-phosphate is bound by residues 37 to 38 (RE), Asp42, 150 to 154 (RRGHT), and Glu174. Glu38 serves as a coordination point for Mg(2+). His153 is a binding site for Mg(2+).

Belongs to the DHBP synthase family. As to quaternary structure, homodimer. Requires Mg(2+) as cofactor. Mn(2+) serves as cofactor.

It catalyses the reaction D-ribulose 5-phosphate = (2S)-2-hydroxy-3-oxobutyl phosphate + formate + H(+). It functions in the pathway cofactor biosynthesis; riboflavin biosynthesis; 2-hydroxy-3-oxobutyl phosphate from D-ribulose 5-phosphate: step 1/1. Functionally, catalyzes the conversion of D-ribulose 5-phosphate to formate and 3,4-dihydroxy-2-butanone 4-phosphate. In Shewanella baltica (strain OS223), this protein is 3,4-dihydroxy-2-butanone 4-phosphate synthase.